Reading from the N-terminus, the 1174-residue chain is Fanconi anemia group J protein homolog (1174 aa).

The region spanning 11-445 (GGVKIHFPCR…KSHEPLRDVC (435 aa)) is the Helicase ATP-binding domain. Residues 101 to 126 (NLDTSPHFNSPSKPSSGRNGVSTPCQ) are compositionally biased toward polar residues. Disordered regions lie at residues 101–160 (NLDT…EKKR) and 187–208 (LASE…DRKD). Over residues 134–143 (LAAKLSAKKQ) the composition is skewed to low complexity. Residues 158–175 (KKRIRPLETTQQIRKRHC) carry the Nuclear localization signal motif. 185 to 192 (ARLASEKR) provides a ligand contact to ATP. [4Fe-4S] cluster-binding residues include Cys-286, Cys-301, Cys-313, and Cys-353. The DEAH box motif lies at 393-396 (VILD). The interval 888-1063 (SRRHQKVTNR…SNETADTSLG (176 aa)) is interaction with BRCA1. 2 stretches are compositionally biased toward polar residues: residues 923–935 (TSVS…SPEN) and 990–1001 (SRSSSPTFGKQT). Disordered regions lie at residues 923 to 1001 (TSVS…GKQT) and 1102 to 1155 (LSPG…SSHS). 3 positions are modified to phosphoserine: Ser-929, Ser-932, and Ser-994. Residues 1138–1147 (DTNEENGELV) are compositionally biased toward acidic residues. N6-acetyllysine is present on Lys-1174.

It belongs to the DEAD box helicase family. DEAH subfamily. In terms of assembly, binds directly to the BRCT domains of BRCA1. Interacts with the CIA complex components CIAO1, CIAO2B and MMS19. It depends on [4Fe-4S] cluster as a cofactor. In terms of processing, phosphorylated. Phosphorylation is necessary for interaction with BRCA1, and is cell-cycle regulated.

The protein localises to the nucleus. It is found in the cytoplasm. The enzyme catalyses Couples ATP hydrolysis with the unwinding of duplex DNA at the replication fork by translocating in the 5'-3' direction. This creates two antiparallel DNA single strands (ssDNA). The leading ssDNA polymer is the template for DNA polymerase III holoenzyme which synthesizes a continuous strand.. The catalysed reaction is ATP + H2O = ADP + phosphate + H(+). DNA-dependent helicase and 5' to 3' DNA helicase required for the maintenance of chromosomal stability. Acts late in the Fanconi anemia pathway, after FANCD2 ubiquitination. Involved in the repair of DNA double-strand breaks by homologous recombination in a manner that depends on its association with BRCA1. Involved in the repair of abasic sites at replication forks by promoting the degradation of DNA-protein cross-links: acts by catalyzing unfolding of HMCES DNA-protein cross-link via its helicase activity, exposing the underlying DNA and enabling cleavage of the DNA-protein adduct by the SPRTN metalloprotease. Can unwind RNA:DNA hybrids and G-quadruplex DNA. The protein is Fanconi anemia group J protein homolog of Mus musculus (Mouse).